The chain runs to 198 residues: Transcription factor BHLH133 (198 aa).

The basic motif; degenerate stretch occupies residues 114–127 (SAESSQSYYAKNRR). The 50-residue stretch at 114–163 (SAESSQSYYAKNRRQRINERLRILQELIPNGTKVDISTMLEEAIQYVKFL) folds into the bHLH domain. A helix-loop-helix motif region spans residues 128–163 (QRINERLRILQELIPNGTKVDISTMLEEAIQYVKFL).

The protein belongs to the bHLH protein family.

It is found in the nucleus. Its function is as follows. Transcription factor that acts as a regulator of iron homeostasis. May act as negative regulator of iron transportation from root to shoot. Does not seem to be involved in the suppression of the induction of iron deficiency responsive genes. The sequence is that of Transcription factor BHLH133 from Oryza sativa subsp. japonica (Rice).